The following is a 370-amino-acid chain: uncharacterized protein (370 aa).

An N-terminal signal peptide occupies residues 1 to 27 (MSSAANEGCVYLFIVVLRLSSFSCVNS). N-linked (GlcNAc...) asparagine glycans are attached at residues Asn59, Asn98, and Asn126. 2 disordered regions span residues 81–101 (SRSHTKKADTRGTADGKNTTA) and 123–167 (LSEN…CHQP). Residues 139-148 (HDDDDDDDLE) are compositionally biased toward acidic residues. Asn171, Asn221, Asn230, and Asn262 each carry an N-linked (GlcNAc...) asparagine glycan.

This is an uncharacterized protein from Saccharomyces cerevisiae (strain ATCC 204508 / S288c) (Baker's yeast).